We begin with the raw amino-acid sequence, 37 residues long: Large ribosomal subunit protein bL36 (37 aa).

This sequence belongs to the bacterial ribosomal protein bL36 family.

The sequence is that of Large ribosomal subunit protein bL36 from Acidithiobacillus ferrooxidans (strain ATCC 23270 / DSM 14882 / CIP 104768 / NCIMB 8455) (Ferrobacillus ferrooxidans (strain ATCC 23270)).